Here is a 382-residue protein sequence, read N- to C-terminus: Succinate--CoA ligase [ADP-forming] subunit beta (382 aa).

The ATP-grasp domain occupies 9–240 (KELFAKYGVK…PRDITEFEAY (232 aa)). Residues Lys-45, 52-54 (GRG), Leu-94, and Glu-99 each bind ATP. Positions 193 and 207 each coordinate Mg(2+). Substrate contacts are provided by residues Asn-260 and 317 to 319 (GIT).

Belongs to the succinate/malate CoA ligase beta subunit family. In terms of assembly, heterotetramer of two alpha and two beta subunits. Mg(2+) serves as cofactor.

It carries out the reaction succinate + ATP + CoA = succinyl-CoA + ADP + phosphate. It catalyses the reaction GTP + succinate + CoA = succinyl-CoA + GDP + phosphate. It functions in the pathway carbohydrate metabolism; tricarboxylic acid cycle; succinate from succinyl-CoA (ligase route): step 1/1. Its function is as follows. Succinyl-CoA synthetase functions in the citric acid cycle (TCA), coupling the hydrolysis of succinyl-CoA to the synthesis of either ATP or GTP and thus represents the only step of substrate-level phosphorylation in the TCA. The beta subunit provides nucleotide specificity of the enzyme and binds the substrate succinate, while the binding sites for coenzyme A and phosphate are found in the alpha subunit. The polypeptide is Succinate--CoA ligase [ADP-forming] subunit beta (Pyrobaculum calidifontis (strain DSM 21063 / JCM 11548 / VA1)).